We begin with the raw amino-acid sequence, 606 residues long: Homeobox protein B-H1 (606 aa).

The span at 1–14 (MKDSMSILTQTPSE) shows a compositional bias: polar residues. 4 disordered regions span residues 1 to 65 (MKDS…PAVA), 104 to 188 (YKQQ…HPHA), 261 to 340 (APAG…AFTD), and 508 to 606 (AAAN…QIQV). Basic residues predominate over residues 21–40 (QLHHHLSHHHHPALHHHPVL). The segment covering 41 to 65 (QHHYSLQQQHQQQQQQQPPAPPAVA) has biased composition (low complexity). Positions 108 to 118 (QQHHHHHHQSH) are enriched in basic residues. Low complexity predominate over residues 119–138 (HNNNNHSGGSSGGTSPTHHN). Over residues 166–188 (HHLHPQSHPHPHPHPHSHPHPHA) the composition is skewed to basic residues. Positions 266-284 (ELDDSSDYHEENEDCDSDE) are enriched in acidic residues. Over residues 286–295 (GSAGGGGGGS) the composition is skewed to gly residues. The span at 297–314 (HMDDHSVCSNGGKDDDGN) shows a compositional bias: basic and acidic residues. Over residues 315–325 (SIKSGSTSDMS) the composition is skewed to polar residues. Positions 331–390 (QRKARTAFTDHQLQTLEKSFERQKYLSVQERQELAHKLDLSDCQVKTWYQNRRTKWMRQT) form a DNA-binding region, homeobox. A compositionally biased stretch (pro residues) spans 513 to 522 (GGPPPPPPPS). Low complexity predominate over residues 523-534 (SAAAATGGSPSP). Positions 561 to 576 (ASPPLPLPLARPPSTP) are enriched in pro residues.

This sequence belongs to the Antp homeobox family. Abundant in the eye-antenna imaginal disk.

Its subcellular location is the nucleus. In terms of biological role, functionally required in R1 and R6 receptor cells and primary pigment cells for normal eye development. The protein is Homeobox protein B-H1 (B-H1) of Drosophila ananassae (Fruit fly).